A 459-amino-acid polypeptide reads, in one-letter code: Ribulose bisphosphate carboxylase large chain (459 aa).

N6,N6,N6-trimethyllysine is present on K4. Positions 113 and 163 each coordinate substrate. Residue K165 is the Proton acceptor of the active site. Position 167 (K167) interacts with substrate. Mg(2+) is bound by residues K191, D193, and E194. K191 is subject to N6-carboxylysine. Catalysis depends on H284, which acts as the Proton acceptor. Substrate is bound by residues R285, H317, and S369.

The protein belongs to the RuBisCO large chain family. Type I subfamily. As to quaternary structure, heterohexadecamer of 8 large chains and 8 small chains; disulfide-linked. The disulfide link is formed within the large subunit homodimers. The cofactor is Mg(2+). The disulfide bond which can form in the large chain dimeric partners within the hexadecamer appears to be associated with oxidative stress and protein turnover.

Its subcellular location is the plastid. It localises to the chloroplast. The enzyme catalyses 2 (2R)-3-phosphoglycerate + 2 H(+) = D-ribulose 1,5-bisphosphate + CO2 + H2O. It catalyses the reaction D-ribulose 1,5-bisphosphate + O2 = 2-phosphoglycolate + (2R)-3-phosphoglycerate + 2 H(+). Functionally, ruBisCO catalyzes two reactions: the carboxylation of D-ribulose 1,5-bisphosphate, the primary event in carbon dioxide fixation, as well as the oxidative fragmentation of the pentose substrate in the photorespiration process. Both reactions occur simultaneously and in competition at the same active site. This chain is Ribulose bisphosphate carboxylase large chain, found in Heuchera micrantha (Alum root).